We begin with the raw amino-acid sequence, 274 residues long: 2,3,4,5-tetrahydropyridine-2,6-dicarboxylate N-succinyltransferase (274 aa).

Substrate-binding residues include Arg-104 and Asp-141.

This sequence belongs to the transferase hexapeptide repeat family. Homotrimer.

It is found in the cytoplasm. The catalysed reaction is (S)-2,3,4,5-tetrahydrodipicolinate + succinyl-CoA + H2O = (S)-2-succinylamino-6-oxoheptanedioate + CoA. It participates in amino-acid biosynthesis; L-lysine biosynthesis via DAP pathway; LL-2,6-diaminopimelate from (S)-tetrahydrodipicolinate (succinylase route): step 1/3. The polypeptide is 2,3,4,5-tetrahydropyridine-2,6-dicarboxylate N-succinyltransferase (Shewanella halifaxensis (strain HAW-EB4)).